Reading from the N-terminus, the 876-residue chain is Beta-glucosidase 1 (876 aa).

The N-terminal stretch at 1–17 (MLMIVQLLVFALGLAVA) is a signal peptide. N-linked (GlcNAc...) asparagine glycans are attached at residues N22, N75, N224, and N267. D295 is an active-site residue. Residues N332, N339, N372, N389, N426, N544, N585, N739, N780, and N790 are each glycosylated (N-linked (GlcNAc...) asparagine).

It belongs to the glycosyl hydrolase 3 family.

The catalysed reaction is Hydrolysis of terminal, non-reducing beta-D-glucosyl residues with release of beta-D-glucose.. Its pathway is glycan metabolism; cellulose degradation. The sequence is that of Beta-glucosidase 1 (BGL1) from Saccharomycopsis fibuligera (Yeast).